The sequence spans 398 residues: Ubiquitin-like modifier-activating enzyme 5 (398 aa).

Gly79, Asp100, Lys123, Asn146, and Asn180 together coordinate ATP. Zn(2+) is bound by residues Cys222 and Cys225. Cys246 functions as the Glycyl thioester intermediate in the catalytic mechanism. Positions 299 and 304 each coordinate Zn(2+). The short motif at 330–342 is the UFM1-interacting sequence (UIS) element; the sequence is VVHEDNEWGIELV. The interval 343–373 is linker; the sequence is SEVTEAELQDASGPIPDLPEGITVAYTIPEK. A UFC1-binding sequence (UFC) motif is present at residues 383 to 398; sequence ETEQSLEELMAQMKKI.

This sequence belongs to the ubiquitin-activating E1 family. UBA5 subfamily. As to quaternary structure, homodimer; homodimerization is required for ufm1 activation. Interacts (via UIS motif) with ufm1; binds ufm1 via a trans-binding mechanism in which ufm1 interacts with distinct sites in both subunits of the uba5 homodimer. Interacts (via C-terminus) with ufc1.

Its subcellular location is the cytoplasm. It localises to the nucleus. The protein localises to the endoplasmic reticulum membrane. It is found in the golgi apparatus. Its function is as follows. E1-like enzyme which specifically catalyzes the first step in ufmylation. Activates ufm1 by first adenylating its C-terminal glycine residue with ATP, and thereafter linking this residue to the side chain of a cysteine residue in E1, yielding a ufm1-E1 thioester and free AMP. Activates ufm1 via a trans-binding mechanism, in which ufm1 interacts with distinct sites in both subunits of the uba5 homodimer. Trans-binding also promotes stabilization of the uba5 homodimer, and enhances ATP-binding. Transfer of ufm1 from uba5 to the E2-like enzyme UFC1 also takes place using a trans mechanism. Ufmylation plays a key role in various processes, such as ribosome recycling, response to DNA damage, interferon response or reticulophagy (also called ER-phagy). This is Ubiquitin-like modifier-activating enzyme 5 from Danio rerio (Zebrafish).